Consider the following 1062-residue polypeptide: Suppressor of mar1-1 protein (1062 aa).

Polar residues predominate over residues 1–17 (MSENTTAPSDNITNEQR). 6 disordered regions span residues 1 to 27 (MSEN…DDVD), 188 to 217 (ENSS…ASTS), 267 to 337 (TKQE…KKRT), 370 to 398 (SSKF…SATQ), 595 to 634 (EIST…QQEG), and 681 to 804 (SGEE…GNLG). Serine 2 bears the N-acetylserine mark. Positions 189-205 (NSSNNTSSQHNTSSSRR) are enriched in low complexity. Composition is skewed to polar residues over residues 267-279 (TKQE…APSS), 287-298 (SLTSVPQRTNNE), and 305-323 (STAN…NNLI). A compositionally biased stretch (basic residues) spans 325–335 (IKRKRGRPPKK). Composition is skewed to polar residues over residues 370–385 (SSKF…NPVS) and 610–629 (TKGS…GISD). Phosphoserine occurs at positions 378, 379, 628, and 681. Positions 685-699 (AITKENAEYERKTPG) are enriched in basic and acidic residues. Phosphothreonine is present on threonine 697. A compositionally biased stretch (polar residues) spans 704 to 716 (TTFVPLENSQPSD). Serine 712 bears the Phosphoserine; by ATM or ATR mark. The residue at position 738 (serine 738) is a Phosphoserine. Residues 781–793 (KGTSSIHNDTESA) are compositionally biased toward polar residues. Threonine 817 is subject to Phosphothreonine.

As to quaternary structure, interacts with RFM1. This interaction is required to recruit HST1.

The protein localises to the nucleus. In terms of biological role, DNA-binding protein that specifically binds the regulatory region of middle sporulation genes (MSE). Required for the repression of middle sporulation genes during vegetative growth. Represses expression via the recruitment of histone deacetylase HST1. This is Suppressor of mar1-1 protein (SUM1) from Saccharomyces cerevisiae (strain ATCC 204508 / S288c) (Baker's yeast).